Consider the following 349-residue polypeptide: N-acetyltaurine hydrolase (349 aa).

Positions 26, 28, 169, 201, 230, and 298 each coordinate a divalent metal cation.

It belongs to the metallo-dependent hydrolases superfamily. Phosphotriesterase family. A divalent metal cation serves as cofactor.

Its subcellular location is the cytoplasm. It is found in the cytosol. The enzyme catalyses N-acetyltaurine + H2O = taurine + acetate. It carries out the reaction N-propanoyltaurine + H2O = propanoate + taurine. It catalyses the reaction N-acetyl-L-methionine + H2O = L-methionine + acetate. The catalysed reaction is N-acetyl-L-isoleucine + H2O = L-isoleucine + acetate. The enzyme catalyses N-acetyl-L-leucine + H2O = L-leucine + acetate. It carries out the reaction N-acetyl-L-valine + H2O = L-valine + acetate. Its function is as follows. N-acetyltaurine hydrolase that catalyzes the hydrolysis of N-acetyltaurine into taurine and acetate. PTER also acts on other N-acetyl amino acids (Met, Ile, Leu, Val) and N-propionyltaurine, but at lower rates. This is N-acetyltaurine hydrolase (pter) from Xenopus tropicalis (Western clawed frog).